Here is a 931-residue protein sequence, read N- to C-terminus: Probable zinc protease PqqL (931 aa).

A Zn(2+)-binding site is contributed by His80. The active-site Proton acceptor is Glu83. His84 and Glu160 together coordinate Zn(2+).

This sequence belongs to the peptidase M16 family. Zn(2+) serves as cofactor.

In Escherichia coli (strain K12), this protein is Probable zinc protease PqqL (pqqL).